Reading from the N-terminus, the 511-residue chain is Cytochrome P450 monooxygenase prhD (511 aa).

Asn7 is a glycosylation site (N-linked (GlcNAc...) asparagine). A helical transmembrane segment spans residues 10–30; it reads GNGMGLLIPLGLSWLIWTILL. Cys444 lines the heme pocket. An N-linked (GlcNAc...) asparagine glycan is attached at Asn502.

This sequence belongs to the cytochrome P450 family. It depends on heme as a cofactor.

It is found in the membrane. It participates in secondary metabolite biosynthesis; terpenoid biosynthesis. In terms of biological role, cytochrome P450 monooxygenase; part of the gene cluster that mediates the biosynthesis of paraherquonin, a meroterpenoid with a unique, highly congested hexacyclic molecular architecture. The first step of the pathway is the synthesis of 3,5-dimethylorsellinic acid (DMOA) by the polyketide synthase prhL. Synthesis of DMOA is followed by farnesylation by the prenyltransferase prhE, methylesterification by the methyl-transferase prhM, epoxidation of the prenyl chain by the flavin-dependent monooxygenase prhF, and cyclization of the farnesyl moiety by the terpene cyclase prhH, to yield the tetracyclic intermediate, protoaustinoid A. The short chain dehydrogenase prhI then oxidizes the C-3 alcohol group of the terpene cyclase product to transform protoaustinoid A into protoaustinoid B. The FAD-binding monooxygenase prhJ catalyzes the oxidation of protoaustinoid B into preaustinoid A which is further oxidized into preaustinoid A1 by FAD-binding monooxygenase phrK. Finally, prhA leads to berkeleydione via the berkeleyone B intermediate. PrhA is a multifunctional dioxygenase that first desaturates at C5-C6 to form berkeleyone B, followed by rearrangement of the A/B-ring to form the cycloheptadiene moiety in berkeleydione. Berkeleydione serves as the key intermediate for the biosynthesis of paraherquonin as well as many other meroterpenoids. The cytochrome P450 monooxygenases prhB, prhD, and prhN, as well as the isomerase prhC, are probably involved in the late stage of paraherquonin biosynthesis, after the production of berkeleydione. Especially prhC might be a multifunctional enzyme that catalyzes the D-ring expansion via intramolecular methoxy rearrangement, as well as the hydrolysis of the expanded D-ring. This chain is Cytochrome P450 monooxygenase prhD, found in Penicillium brasilianum.